An 882-amino-acid chain; its full sequence is DNA mismatch repair protein MutS (882 aa).

629-636 (GPNMGGKS) lines the ATP pocket.

This sequence belongs to the DNA mismatch repair MutS family.

This protein is involved in the repair of mismatches in DNA. It is possible that it carries out the mismatch recognition step. This protein has a weak ATPase activity. The sequence is that of DNA mismatch repair protein MutS from Ralstonia pickettii (strain 12J).